Reading from the N-terminus, the 445-residue chain is Tubulin beta-1 chain (445 aa).

The GTP site is built by Gln11, Glu69, Ser138, Gly142, Thr143, Gly144, Asn204, and Asn226. Residue Glu69 coordinates Mg(2+). A disordered region spans residues 422–445 (QYQDAGMDDEYGEEYEDEAPAEEE). The span at 427–445 (GMDDEYGEEYEDEAPAEEE) shows a compositional bias: acidic residues.

This sequence belongs to the tubulin family. Dimer of alpha and beta chains. A typical microtubule is a hollow water-filled tube with an outer diameter of 25 nm and an inner diameter of 15 nM. Alpha-beta heterodimers associate head-to-tail to form protofilaments running lengthwise along the microtubule wall with the beta-tubulin subunit facing the microtubule plus end conferring a structural polarity. Microtubules usually have 13 protofilaments but different protofilament numbers can be found in some organisms and specialized cells. It depends on Mg(2+) as a cofactor.

The protein localises to the cytoplasm. It localises to the cytoskeleton. In terms of biological role, tubulin is the major constituent of microtubules, a cylinder consisting of laterally associated linear protofilaments composed of alpha- and beta-tubulin heterodimers. Microtubules grow by the addition of GTP-tubulin dimers to the microtubule end, where a stabilizing cap forms. Below the cap, tubulin dimers are in GDP-bound state, owing to GTPase activity of alpha-tubulin. This Colletotrichum graminicola (Maize anthracnose fungus) protein is Tubulin beta-1 chain (TUB1).